The primary structure comprises 381 residues: GDP-mannose-dependent monoacylated alpha-(1-6)-phosphatidylinositol monomannoside mannosyltransferase (381 aa).

Positions 206, 211, 261, and 298 each coordinate GDP-alpha-D-mannose.

This sequence belongs to the glycosyltransferase group 1 family. Glycosyltransferase 4 subfamily.

It catalyses the reaction a 1,2-diacyl-sn-glycero-3-phospho-[alpha-D-mannopyranosyl-(1&lt;-&gt;6)-D-myo-inositol] + GDP-alpha-D-mannose = a 2,6-O-bis(alpha-D-mannopyranosyl)-1-phosphatidyl-1D-myo-inositol + GDP + H(+). The catalysed reaction is a 1,2-diacyl-sn-glycero-3-phospho-[alpha-D-6-acyl-mannopyranosyl-(1&lt;-&gt;6)-D-myo-inositol] + GDP-alpha-D-mannose = a 2-O-(alpha-D-mannosyl)-6-O-(6-O-acyl-alpha-D-mannosyl)-1-phosphatidyl-1D-myo-inositol + GDP + H(+). The protein operates within phospholipid metabolism; phosphatidylinositol metabolism. In terms of biological role, involved in the biosynthesis of phosphatidyl-myo-inositol mannosides (PIM) which are early precursors in the biosynthesis of lipomannans (LM) and lipoarabinomannans (LAM). Catalyzes the addition of a mannosyl residue from GDP-D-mannose (GDP-Man) to the position 6 of a phosphatidyl-myo-inositol bearing an alpha-1,2-linked mannose residue (PIM1) to generate phosphatidyl-myo-inositol bearing alpha-1,2- and alpha-1,6-linked mannose residues (Ac1PIM2). PimB also catalyzes the addition of a mannosyl residue from GDP-Man to the position 6 of phosphatidyl-myo-inositol bearing an acylated alpha-1,2-linked mannose residue (Ac1PIM1) to generate monoacylated phosphatidyl-myo-inositol bearing alpha-1,2- and alpha-1,6-linked mannose residues (Ac1PIM2). The addition of the second mannosyl residue by PimB preferentially occurs before the acylation of the mannosyl residue transferred by PimA. Also able to transfer a mannosyl residue from GDP-Man to the position 6 of a phosphatidyl-myo-inositol (PI), but this reaction is very slow. This chain is GDP-mannose-dependent monoacylated alpha-(1-6)-phosphatidylinositol monomannoside mannosyltransferase, found in Corynebacterium glutamicum (strain ATCC 13032 / DSM 20300 / JCM 1318 / BCRC 11384 / CCUG 27702 / LMG 3730 / NBRC 12168 / NCIMB 10025 / NRRL B-2784 / 534).